Reading from the N-terminus, the 148-residue chain is L-alanine exporter AlaE (148 aa).

The next 4 helical transmembrane spans lie at 18-38 (FALV…ISGM), 49-69 (VSIP…DAFI), 88-108 (LLAY…SVGA), and 115-135 (TAVA…GYFL).

It belongs to the AlaE exporter family.

Its subcellular location is the cell inner membrane. In terms of biological role, exports L-alanine. The sequence is that of L-alanine exporter AlaE from Yersinia enterocolitica subsp. palearctica serotype O:3 (strain DSM 13030 / CIP 106945 / Y11).